We begin with the raw amino-acid sequence, 651 residues long: Bromodomain-containing protein 7 (651 aa).

A Glycyl lysine isopeptide (Lys-Gly) (interchain with G-Cter in SUMO2) cross-link involves residue lysine 21. Over residues threonine 35 to aspartate 45 the composition is skewed to polar residues. The disordered stretch occupies residues threonine 35–glutamate 132. Residues serine 47–lysine 57 are compositionally biased toward basic and acidic residues. Lysine 52 participates in a covalent cross-link: Glycyl lysine isopeptide (Lys-Gly) (interchain with G-Cter in SUMO2). Positions histidine 58–glycine 69 are enriched in basic residues. The Nuclear localization signal motif lies at lysine 65–arginine 96. A compositionally biased stretch (basic and acidic residues) spans glutamate 70–glutamine 106. Residues lysine 127, lysine 186, lysine 197, lysine 201, lysine 212, and lysine 241 each participate in a glycyl lysine isopeptide (Lys-Gly) (interchain with G-Cter in SUMO2) cross-link. The region spanning valine 131–glutamate 235 is the Bromo domain. Residues threonine 253–methionine 301 form a disordered region. Positions glutamine 273–methionine 301 are enriched in basic and acidic residues. Phosphoserine is present on residues serine 279 and serine 289. Residues lysine 305 and lysine 307 each participate in a glycyl lysine isopeptide (Lys-Gly) (interchain with G-Cter in SUMO2) cross-link. Residue lysine 328 is modified to N6-acetyllysine. Residue lysine 344 forms a Glycyl lysine isopeptide (Lys-Gly) (interchain with G-Cter in SUMO2) linkage. Position 380 is a phosphoserine (serine 380). Lysine 389 is covalently cross-linked (Glycyl lysine isopeptide (Lys-Gly) (interchain with G-Cter in SUMO2)). Phosphoserine is present on serine 482. Threonine 514 bears the Phosphothreonine mark. Residues serine 536–arginine 567 adopt a coiled-coil conformation. A Phosphoserine modification is found at serine 621.

Interacts with TRIM24, PTPN13 and DVL1. Identified in a complex with SMARCA4/BRG1, SMARCC1/BAF155, SMARCE1/BAF57, DPF2/BAF45D and ARID2, subunits of the SWI/SNF-B (PBAF) chromatin remodeling complex. Interacts with IRF2 and HNRPUL1. Interacts (via N-terminus) with TP53. Interacts (via C-terminus) with EP300. Interacts with BRCA1. Interacts (via bromo domain) with histone H3 (via N-terminus) acetylated at 'Lys-14' (H3K14ac). Has low affinity for histone H3 acetylated at 'Lys-9' (H3K9ac). Has the highest affinity for histone H3 that is acetylated both at 'Lys-9' (H3K9ac) and at 'Lys-14' (H3K14ac). Has very low affinity for non-acetylated histone H3. Interacts (via bromo domain) with histone H4 (via N-terminus) acetylated at 'Lys-8' (H3K8ac) (in vitro).

The protein localises to the nucleus. It localises to the chromosome. Functionally, acts both as coactivator and as corepressor. May play a role in chromatin remodeling. Activator of the Wnt signaling pathway in a DVL1-dependent manner by negatively regulating the GSK3B phosphotransferase activity. Induces dephosphorylation of GSK3B at 'Tyr-216'. Down-regulates TRIM24-mediated activation of transcriptional activation by AR. Transcriptional corepressor that down-regulates the expression of target genes. Binds to target promoters, leading to increased histone H3 acetylation at 'Lys-9' (H3K9ac). Binds to the ESR1 promoter. Recruits BRCA1 and POU2F1 to the ESR1 promoter. Coactivator for TP53-mediated activation of transcription of a set of target genes. Required for TP53-mediated cell-cycle arrest in response to oncogene activation. Promotes acetylation of TP53 at 'Lys-382', and thereby promotes efficient recruitment of TP53 to target promoters. Inhibits cell cycle progression from G1 to S phase. The sequence is that of Bromodomain-containing protein 7 (BRD7) from Homo sapiens (Human).